The sequence spans 370 residues: DNA replication and repair protein RecF (370 aa).

Position 30 to 37 (30 to 37) interacts with ATP; that stretch reads GENAQGKT.

Belongs to the RecF family.

It is found in the cytoplasm. In terms of biological role, the RecF protein is involved in DNA metabolism; it is required for DNA replication and normal SOS inducibility. RecF binds preferentially to single-stranded, linear DNA. It also seems to bind ATP. In Bacillus velezensis (strain DSM 23117 / BGSC 10A6 / LMG 26770 / FZB42) (Bacillus amyloliquefaciens subsp. plantarum), this protein is DNA replication and repair protein RecF.